Consider the following 429-residue polypeptide: Glucan 1,3-beta-glucosidase (429 aa).

The first 19 residues, 1 to 19 (MLSMQVVSLISLLVSVCLA), serve as a signal peptide directing secretion. Residues 20–27 (QPLPLSKR) constitute a propeptide that is removed on maturation. Glutamate 215 serves as the catalytic Proton donor. 2 disulfide bridges follow: cysteine 299-cysteine 425 and cysteine 324-cysteine 354. Glutamate 316 (nucleophile) is an active-site residue.

Belongs to the glycosyl hydrolase 5 (cellulase A) family.

The protein resides in the secreted. The enzyme catalyses Successive hydrolysis of beta-D-glucose units from the non-reducing ends of (1-&gt;3)-beta-D-glucans, releasing alpha-glucose.. Beta-glucanases participate in the metabolism of beta-glucan, the main structural component of the cell wall. It could also function biosynthetically as a transglycosylase. The sequence is that of Glucan 1,3-beta-glucosidase from Kluyveromyces lactis (strain ATCC 8585 / CBS 2359 / DSM 70799 / NBRC 1267 / NRRL Y-1140 / WM37) (Yeast).